The following is a 507-amino-acid chain: Glycosyltransferase family 92 protein C33H5.2 (507 aa).

A helical membrane pass occupies residues 6 to 26 (VILVFCASFALFFTFIIFGRY). In terms of domain architecture, GT92 spans 155–444 (RDVVMCIAPL…LKCYNEKFYD (290 aa)).

It belongs to the glycosyltransferase 92 family.

The protein localises to the membrane. The polypeptide is Glycosyltransferase family 92 protein C33H5.2 (Caenorhabditis elegans).